A 356-amino-acid chain; its full sequence is tRNA N6-adenosine threonylcarbamoyltransferase (356 aa).

2 residues coordinate Fe cation: histidine 115 and histidine 119. Residues 138-142 (LVSGG), aspartate 171, glycine 184, and asparagine 277 contribute to the substrate site. Residue aspartate 305 coordinates Fe cation.

The protein belongs to the KAE1 / TsaD family. Requires Fe(2+) as cofactor.

It is found in the cytoplasm. It carries out the reaction L-threonylcarbamoyladenylate + adenosine(37) in tRNA = N(6)-L-threonylcarbamoyladenosine(37) in tRNA + AMP + H(+). In terms of biological role, required for the formation of a threonylcarbamoyl group on adenosine at position 37 (t(6)A37) in tRNAs that read codons beginning with adenine. Is involved in the transfer of the threonylcarbamoyl moiety of threonylcarbamoyl-AMP (TC-AMP) to the N6 group of A37, together with TsaE and TsaB. TsaD likely plays a direct catalytic role in this reaction. This Polaromonas naphthalenivorans (strain CJ2) protein is tRNA N6-adenosine threonylcarbamoyltransferase.